A 359-amino-acid chain; its full sequence is Protein RecA (359 aa).

Position 64 to 71 (64 to 71 (GHESSGKT)) interacts with ATP. The segment at 328 to 359 (NKYPNKDSNDSPKEGSKIKTKVNPAVTQDELI) is disordered. Residues 331–344 (PNKDSNDSPKEGSK) are compositionally biased toward basic and acidic residues.

It belongs to the RecA family.

It is found in the cytoplasm. Its function is as follows. Can catalyze the hydrolysis of ATP in the presence of single-stranded DNA, the ATP-dependent uptake of single-stranded DNA by duplex DNA, and the ATP-dependent hybridization of homologous single-stranded DNAs. It interacts with LexA causing its activation and leading to its autocatalytic cleavage. This Francisella tularensis subsp. novicida (strain U112) protein is Protein RecA.